The chain runs to 726 residues: Cyclin-T1 (726 aa).

Phosphoserine is present on Ser117. The Nuclear localization signal, and interaction with Tat-TAR RNA signature appears at 253-270 (KRIWNWRACEAAKKTKAD). Phosphoserine is present on Ser340. Lys342 participates in a covalent cross-link: Glycyl lysine isopeptide (Lys-Gly) (interchain with G-Cter in SUMO2). Residues 360 to 385 (VDHSLPQDGSNAFISQKQNSKSVPSA) form a disordered region. A compositionally biased stretch (polar residues) spans 366–382 (QDGSNAFISQKQNSKSV). A coiled-coil region spans residues 384–425 (SAKVSLKEYRAKHAEELAAQKRQLENMEANVKSQYAYAAQNL). A Phosphoserine modification is found at Ser388. Residue Lys390 is modified to N6-acetyllysine. Residue Lys415 forms a Glycyl lysine isopeptide (Lys-Gly) (interchain with G-Cter in SUMO2) linkage. An ADP-ribosylserine mark is found at Ser416, Ser474, and Ser475. The segment at 480–550 (IKMRIKVHAA…RPGDPKHSSQ (71 aa)) is histidine-rich domain (HRD). Residue Lys481 forms a Glycyl lysine isopeptide (Lys-Gly) (interchain with G-Cter in SUMO2) linkage. Lys485 bears the N6-(ADP-ribosyl)lysine mark. Residue His487 is modified to ADP-ribosylhistidine. A compositionally biased stretch (basic and acidic residues) spans 487 to 506 (HAAADKHNSVEDSVTKSREH). 2 disordered regions span residues 487–650 (HAAA…NGHN) and 688–726 (SDYL…PLPK). Phosphoserine occurs at positions 495 and 499. Basic residues predominate over residues 507–530 (KEKHKTHPSNHHHHHNHHSHKHSH). Residues 527-570 (KHSHSQLPVGTGNKRPGDPKHSSQTSNLAHKTYSLSSSFSSSSS) form a required for interaction with ZMYND8 region. His530 bears the ADP-ribosylhistidine mark. ADP-ribosylserine occurs at positions 531, 549, and 552. His556 carries the post-translational modification ADP-ribosylhistidine. Over residues 560–570 (SLSSSFSSSSS) the composition is skewed to low complexity. An ADP-ribosylserine modification is found at Ser563. Residues Ser564 and Ser577 each carry the phosphoserine modification. Residues 594–609 (STKSSSLNFSFPSLPT) are compositionally biased toward low complexity. The span at 615–630 (GHSSDTSGLSFSQPSC) shows a compositional bias: polar residues. ADP-ribosylserine is present on Ser637. Pro residues predominate over residues 710–726 (PPPLPSEPPPPLPPLPK).

It belongs to the cyclin family. Cyclin C subfamily. In terms of assembly, cyclin-T1 is the predominant cyclin that associates with CDK9 to form a heterodimer called P-TEFb. P-TEFb forms a complex with AFF4/AF5Q31. Component of a complex which is at least composed of HTATSF1/Tat-SF1, P-TEFb complex, RNA pol II, SUPT5H, and NCL/nucleolin. Component of the 7SK snRNP complex at least composed of P-TEFb (composed of CDK9 and CCNT1/cyclin-T1), HEXIM1, HEXIM2, BCDIN3, SART3 proteins and 7SK and U6 snRNAs. Interacts (via central region) with ZMYND8 (via N-terminus); the interaction is direct and the association appears to occur between homodimeric ZMYND8 and the activated form of the P-TEFb complex. Interacts with BRD4, targets chromatin binding. Interacts with JMJD6. Interacts with MDFIC. Interacts with HSF1. Interacts with HTATSF1. Interacts with TBX21. (Microbial infection) Interacts with the transactivation region of HIV-1, HIV-2 and SIV Tat. As to quaternary structure, (Microbial infection) Interacts with human herpes virus 1 (HHV-1) transcriptional regulator ICP22. Post-translationally, ADP-ribosylation on serine residues by PARP1 in response to DNA damage disrupts the phase separation activity of CCNT1, thereby preventing activation of CDK9. As to expression, ubiquitously expressed.

The protein resides in the nucleus. In terms of biological role, regulatory subunit of the cyclin-dependent kinase pair (CDK9/cyclin-T1) complex, also called positive transcription elongation factor B (P-TEFb), which facilitates the transition from abortive to productive elongation by phosphorylating the CTD (C-terminal domain) of the large subunit of RNA polymerase II (RNA Pol II). Required to activate the protein kinase activity of CDK9: acts by mediating formation of liquid-liquid phase separation (LLPS) that enhances binding of P-TEFb to the CTD of RNA Pol II. Its function is as follows. (Microbial infection) In case of HIV or SIV infections, binds to the transactivation domain of the viral nuclear transcriptional activator, Tat, thereby increasing Tat's affinity for the transactivating response RNA element (TAR RNA). Serves as an essential cofactor for Tat, by promoting RNA Pol II activation, allowing transcription of viral genes. The sequence is that of Cyclin-T1 (CCNT1) from Homo sapiens (Human).